Reading from the N-terminus, the 278-residue chain is 3-methyl-2-oxobutanoate hydroxymethyltransferase (278 aa).

Mg(2+) is bound by residues Asp-43 and Asp-82. Residues 43–44 (DS), Asp-82, and Lys-112 contribute to the 3-methyl-2-oxobutanoate site. Glu-114 is a binding site for Mg(2+). Glu-181 serves as the catalytic Proton acceptor.

It belongs to the PanB family. As to quaternary structure, homodecamer; pentamer of dimers. Mg(2+) is required as a cofactor.

It is found in the cytoplasm. It catalyses the reaction 3-methyl-2-oxobutanoate + (6R)-5,10-methylene-5,6,7,8-tetrahydrofolate + H2O = 2-dehydropantoate + (6S)-5,6,7,8-tetrahydrofolate. Its pathway is cofactor biosynthesis; (R)-pantothenate biosynthesis; (R)-pantoate from 3-methyl-2-oxobutanoate: step 1/2. Catalyzes the reversible reaction in which hydroxymethyl group from 5,10-methylenetetrahydrofolate is transferred onto alpha-ketoisovalerate to form ketopantoate. This is 3-methyl-2-oxobutanoate hydroxymethyltransferase from Bacillus cereus (strain AH187).